Consider the following 1158-residue polypeptide: Putative HERC2-like protein 3 (1158 aa).

A disordered region spans residues 281-302 (PRKKRVPKKPESTDDEEKIGNE). A compositionally biased stretch (acidic residues) spans 293 to 302 (TDDEEKIGNE). Residues 587–660 (SGPELAAMMK…NYDLKLAELP (74 aa)) enclose the MIB/HERC2 domain. Residues 662 to 684 (PAQPSAEDSDTEDDSEAEQTERN) are disordered. The segment covering 668–679 (EDSDTEDDSEAE) has biased composition (acidic residues).

The polypeptide is Putative HERC2-like protein 3 (HERC2P3) (Homo sapiens (Human)).